The following is a 192-amino-acid chain: Molybdenum cofactor guanylyltransferase (192 aa).

GTP contacts are provided by residues 10-12, Lys-23, Asn-51, Asp-69, and Asp-99; that span reads LAG. Residue Asp-99 participates in Mg(2+) binding.

Belongs to the MobA family. Monomer. The cofactor is Mg(2+).

It is found in the cytoplasm. It carries out the reaction Mo-molybdopterin + GTP + H(+) = Mo-molybdopterin guanine dinucleotide + diphosphate. In terms of biological role, transfers a GMP moiety from GTP to Mo-molybdopterin (Mo-MPT) cofactor (Moco or molybdenum cofactor) to form Mo-molybdopterin guanine dinucleotide (Mo-MGD) cofactor. The chain is Molybdenum cofactor guanylyltransferase from Haemophilus influenzae (strain ATCC 51907 / DSM 11121 / KW20 / Rd).